Reading from the N-terminus, the 309-residue chain is MADRKLVVVFGATGAQGGSVARALLEDGTFRIRVVTRNPEQRAAKELKQQGAEVVRGDQDDAASMELALAGAHATFIVTNYWETCSQDREVQQPHQWDQVFKQGKLLADLAKRLGLHYVVYSGLENIRKLTAGKLAAGHFDGKGEVEEYFRDIGVPMTSVRLPCYFENLLSYFLPQKAADGKSFLLDLPMGDVPMDGMSVSDLGPVVLSLLKKPEEYVGQNIGLSTCRHTAEEYAALLSKHTGKAVHHAKTTPEDYEKLGFQGAQDLANMFRFYTLKPDRNIHLTLRLNPKAQTLDQWLEQHKGDFAQL.

Residues 11–16 (GATGAQ), 37–41 (RNPEQ), 58–59 (DQ), 79–81 (TNY), K102, K143, and 165–168 (YFEN) each bind NADP(+). Residues 163-199 (PCYFENLLSYFLPQKAADGKSFLLDLPMGDVPMDGMS) are interaction with ASS1.

This sequence belongs to the NmrA-type oxidoreductase family. In terms of assembly, homodimer. Interacts with ASS1. Interaction is enhanced by low NADPH/NADP(+) ratios, which results in inhibition of ASS1 activity.

The protein localises to the cytoplasm. Its subcellular location is the perinuclear region. It localises to the nucleus. Redox sensor protein. Undergoes restructuring and subcellular redistribution in response to changes in intracellular NADPH/NADP(+) levels. At low NADPH concentrations the protein is found mainly as a monomer, and binds argininosuccinate synthase (ASS1), the enzyme involved in nitric oxide synthesis. Association with ASS1 impairs its activity and reduces the production of nitric oxide, which subsecuently prevents apoptosis. Under normal NADPH concentrations, the protein is found as a dimer and hides the binding site for ASS1. The homodimer binds one molecule of NADPH. Has higher affinity for NADPH than for NADP(+). Binding to NADPH is necessary to form a stable dimer. This chain is NmrA-like family domain-containing protein 1 (Nmral1), found in Mus musculus (Mouse).